We begin with the raw amino-acid sequence, 569 residues long: Formate--tetrahydrofolate ligase (569 aa).

Position 68 to 75 (68 to 75) interacts with ATP; it reads TPAGEGKT.

It belongs to the formate--tetrahydrofolate ligase family.

The catalysed reaction is (6S)-5,6,7,8-tetrahydrofolate + formate + ATP = (6R)-10-formyltetrahydrofolate + ADP + phosphate. Its pathway is one-carbon metabolism; tetrahydrofolate interconversion. This chain is Formate--tetrahydrofolate ligase, found in Psychrobacter sp. (strain PRwf-1).